The following is a 105-amino-acid chain: Class I hydrophobin 1 (105 aa).

The first 17 residues, 1-17, serve as a signal peptide directing secretion; that stretch reads MQFTSFAILAISAVASA. Disulfide bonds link Cys-36–Cys-85, Cys-44–Cys-78, Cys-45–Cys-63, and Cys-86–Cys-100. Residues Asn-48, Asn-67, and Asn-97 are each glycosylated (N-linked (GlcNAc...) asparagine).

It belongs to the fungal hydrophobin family. In terms of assembly, self-assembles to form functional amyloid fibrils called rodlets. Self-assembly into fibrillar rodlets occurs spontaneously at hydrophobic:hydrophilic interfaces and the rodlets further associate laterally to form amphipathic monolayers. Abundant on conidia and aerial structures formed in vitro and emerging from disease lesions on infected tomato plants.

It localises to the secreted. The protein localises to the cell wall. In terms of biological role, aerial growth, conidiation, and dispersal of filamentous fungi in the environment rely upon a capability of their secreting small amphipathic proteins called hydrophobins (HPBs) with low sequence identity. Class I can self-assemble into an outermost layer of rodlet bundles on aerial cell surfaces, conferring cellular hydrophobicity that supports fungal growth, development and dispersal; whereas Class II form highly ordered films at water-air interfaces through intermolecular interactions but contribute nothing to the rodlet structure. Hcf-1 is a class I hydrophobin that is not necessary for the development of hyphae or conidia but acts as the main determinant of conidium hydrophobicity and, thus, is required for efficient water-mediated dispersal of conidia. Forms a component of the rodlet layer, but other hydrophobins must also participate in this proces. This chain is Class I hydrophobin 1, found in Passalora fulva (Tomato leaf mold).